Consider the following 564-residue polypeptide: Ubiquitin carboxyl-terminal hydrolase 39 (564 aa).

The disordered stretch occupies residues 1-96; it reads MSSRSKRQSH…VRAKNGRVDS (96 aa). The span at 28–39 shows a compositional bias: basic and acidic residues; that stretch reads IKKERDREKEPE. Ser46 is modified (phosphoserine). Lys51 participates in a covalent cross-link: Glycyl lysine isopeptide (Lys-Gly) (interchain with G-Cter in SUMO2). Residues 59–69 are compositionally biased toward low complexity; that stretch reads REVPAPALPVV. Ser81 is subject to Phosphoserine. The span at 84–96 shows a compositional bias: basic and acidic residues; that stretch reads EREVRAKNGRVDS. The UBP-type; degenerate zinc-finger motif lies at 102–199; sequence RHCPYLDTIN…YVLKPTFTKQ (98 aa). Residues Cys135, Cys138, His154, and His160 each contribute to the Zn(2+) site. Positions 224-554 constitute a USP domain; sequence VGLNNIKAND…EAYIQIWKRR (331 aa).

It belongs to the peptidase C19 family. The U4/U6-U5 tri-snRNP complex is a building block of the precatalytic spliceosome (spliceosome B complex). Component of the U4/U6-U5 tri-snRNP complex composed of the U4, U6 and U5 snRNAs and at least PRPF3, PRPF4, PRPF6, PRPF8, PRPF31, SNRNP200, TXNL4A, SNRNP40, SNRPB, SNRPD1, SNRPD2, SNRPD3, SNRPE, SNRPF, SNRPG, DDX23, CD2BP2, PPIH, SNU13, EFTUD2, SART1 and USP39, plus LSM2, LSM3, LSM4, LSM5, LSM6, LSM7 and LSM8.

It localises to the nucleus. It carries out the reaction Thiol-dependent hydrolysis of ester, thioester, amide, peptide and isopeptide bonds formed by the C-terminal Gly of ubiquitin (a 76-residue protein attached to proteins as an intracellular targeting signal).. Functionally, deubiquitinating enzyme that plays a role in many cellular processes including cellular antiviral response, epithelial morphogenesis, DNA repair or B-cell development. Plays a role in pre-mRNA splicing as a component of the U4/U6-U5 tri-snRNP, one of the building blocks of the precatalytic spliceosome. Specifically regulates immunoglobulin gene rearrangement in a spliceosome-dependent manner, which involves modulating chromatin interactions at the Igh locus and therefore plays an essential role in B-cell development. Regulates AURKB mRNA levels, and thereby plays a role in cytokinesis and in the spindle checkpoint. Regulates apoptosis and G2/M cell cycle checkpoint in response to DNA damage by deubiquitinating and stabilizing CHK2. Also plays an important role in DNA repair by controlling the recruitment of XRCC4/LIG4 to DNA double-strand breaks for non-homologous end-joining repair. Participates in antiviral activity by affecting the type I IFN signaling by stabilizing STAT1 and decreasing its 'Lys-6'-linked ubiquitination. Contributes to non-canonical Wnt signaling during epidermal differentiation. Acts as a negative regulator NF-kappa-B activation through deubiquitination of 'Lys-48'-linked ubiquitination of NFKBIA. The polypeptide is Ubiquitin carboxyl-terminal hydrolase 39 (Mus musculus (Mouse)).